Consider the following 330-residue polypeptide: Phosphate acyltransferase (330 aa).

It belongs to the PlsX family. As to quaternary structure, homodimer. Probably interacts with PlsY.

The protein localises to the cytoplasm. It catalyses the reaction a fatty acyl-[ACP] + phosphate = an acyl phosphate + holo-[ACP]. It participates in lipid metabolism; phospholipid metabolism. In terms of biological role, catalyzes the reversible formation of acyl-phosphate (acyl-PO(4)) from acyl-[acyl-carrier-protein] (acyl-ACP). This enzyme utilizes acyl-ACP as fatty acyl donor, but not acyl-CoA. This Campylobacter hominis (strain ATCC BAA-381 / DSM 21671 / CCUG 45161 / LMG 19568 / NCTC 13146 / CH001A) protein is Phosphate acyltransferase.